A 275-amino-acid chain; its full sequence is 4-hydroxy-3-methylbut-2-enyl diphosphate reductase (275 aa).

Cys-12 provides a ligand contact to [4Fe-4S] cluster. (2E)-4-hydroxy-3-methylbut-2-enyl diphosphate is bound by residues His-40 and His-70. Dimethylallyl diphosphate-binding residues include His-40 and His-70. 2 residues coordinate isopentenyl diphosphate: His-40 and His-70. Position 92 (Cys-92) interacts with [4Fe-4S] cluster. His-119 is a binding site for (2E)-4-hydroxy-3-methylbut-2-enyl diphosphate. His-119 is a binding site for dimethylallyl diphosphate. His-119 lines the isopentenyl diphosphate pocket. The active-site Proton donor is Glu-121. Thr-151 contributes to the (2E)-4-hydroxy-3-methylbut-2-enyl diphosphate binding site. Cys-181 serves as a coordination point for [4Fe-4S] cluster. (2E)-4-hydroxy-3-methylbut-2-enyl diphosphate contacts are provided by Ser-209, Ser-210, Asn-211, and Ser-251. The dimethylallyl diphosphate site is built by Ser-209, Ser-210, Asn-211, and Ser-251. Positions 209, 210, 211, and 251 each coordinate isopentenyl diphosphate.

This sequence belongs to the IspH family. Requires [4Fe-4S] cluster as cofactor.

It carries out the reaction isopentenyl diphosphate + 2 oxidized [2Fe-2S]-[ferredoxin] + H2O = (2E)-4-hydroxy-3-methylbut-2-enyl diphosphate + 2 reduced [2Fe-2S]-[ferredoxin] + 2 H(+). The enzyme catalyses dimethylallyl diphosphate + 2 oxidized [2Fe-2S]-[ferredoxin] + H2O = (2E)-4-hydroxy-3-methylbut-2-enyl diphosphate + 2 reduced [2Fe-2S]-[ferredoxin] + 2 H(+). Its pathway is isoprenoid biosynthesis; dimethylallyl diphosphate biosynthesis; dimethylallyl diphosphate from (2E)-4-hydroxy-3-methylbutenyl diphosphate: step 1/1. It participates in isoprenoid biosynthesis; isopentenyl diphosphate biosynthesis via DXP pathway; isopentenyl diphosphate from 1-deoxy-D-xylulose 5-phosphate: step 6/6. Its function is as follows. Catalyzes the conversion of 1-hydroxy-2-methyl-2-(E)-butenyl 4-diphosphate (HMBPP) into a mixture of isopentenyl diphosphate (IPP) and dimethylallyl diphosphate (DMAPP). Acts in the terminal step of the DOXP/MEP pathway for isoprenoid precursor biosynthesis. The chain is 4-hydroxy-3-methylbut-2-enyl diphosphate reductase from Thermotoga petrophila (strain ATCC BAA-488 / DSM 13995 / JCM 10881 / RKU-1).